Consider the following 491-residue polypeptide: Ketol-acid reductoisomerase (NADP(+)) (491 aa).

The region spanning 14–208 is the KARI N-terminal Rossmann domain; that stretch reads LKHLGKCRFM…GSHRAGVLES (195 aa). Residues 45–48, Arg68, and Ser78 each bind NADP(+); that span reads CGSQ. His132 is an active-site residue. Gly158 is an NADP(+) binding site. KARI C-terminal knotted domains lie at 209 to 344 and 345 to 485; these read SFVA…QAPN and YQQE…MQNM. 4 residues coordinate Mg(2+): Asp217, Glu221, Glu389, and Glu393. Ser414 contributes to the substrate binding site.

Belongs to the ketol-acid reductoisomerase family. Requires Mg(2+) as cofactor.

It carries out the reaction (2R)-2,3-dihydroxy-3-methylbutanoate + NADP(+) = (2S)-2-acetolactate + NADPH + H(+). The enzyme catalyses (2R,3R)-2,3-dihydroxy-3-methylpentanoate + NADP(+) = (S)-2-ethyl-2-hydroxy-3-oxobutanoate + NADPH + H(+). The protein operates within amino-acid biosynthesis; L-isoleucine biosynthesis; L-isoleucine from 2-oxobutanoate: step 2/4. It functions in the pathway amino-acid biosynthesis; L-valine biosynthesis; L-valine from pyruvate: step 2/4. In terms of biological role, involved in the biosynthesis of branched-chain amino acids (BCAA). Catalyzes an alkyl-migration followed by a ketol-acid reduction of (S)-2-acetolactate (S2AL) to yield (R)-2,3-dihydroxy-isovalerate. In the isomerase reaction, S2AL is rearranged via a Mg-dependent methyl migration to produce 3-hydroxy-3-methyl-2-ketobutyrate (HMKB). In the reductase reaction, this 2-ketoacid undergoes a metal-dependent reduction by NADPH to yield (R)-2,3-dihydroxy-isovalerate. This chain is Ketol-acid reductoisomerase (NADP(+)), found in Blochmanniella pennsylvanica (strain BPEN).